The primary structure comprises 119 residues: NLYQFKNMIQCTVPNRSWWHFADYGCFCGYGGSGTPVDELDRCCQTHDNCYSEAEKLSGCKPYIKTYSYDCSQGKLTCSGNDDKCAAFVCNCDRVAAICFAGAPYIDDNYNVDLNERCQ.

Cystine bridges form between Cys11/Cys71, Cys26/Cys118, Cys28/Cys44, Cys43/Cys99, Cys50/Cys92, Cys60/Cys85, and Cys78/Cys90. Ca(2+)-binding residues include Phe27, Gly29, and Gly31. His47 is a catalytic residue. A Ca(2+)-binding site is contributed by Asp48. Asp93 is an active-site residue.

The protein belongs to the phospholipase A2 family. Group I subfamily. D49 sub-subfamily. Ca(2+) is required as a cofactor. As to expression, expressed by the venom gland.

The protein localises to the secreted. The catalysed reaction is a 1,2-diacyl-sn-glycero-3-phosphocholine + H2O = a 1-acyl-sn-glycero-3-phosphocholine + a fatty acid + H(+). Its function is as follows. PLA2 catalyzes the calcium-dependent hydrolysis of the 2-acyl groups in 3-sn-phosphoglycerides. This Aspidelaps scutatus (Shield-nose snake) protein is Acidic phospholipase A2 CM-II.